The primary structure comprises 179 residues: Large ribosomal subunit protein uL5 (179 aa).

Belongs to the universal ribosomal protein uL5 family. As to quaternary structure, part of the 50S ribosomal subunit; part of the 5S rRNA/L5/L18/L25 subcomplex. Contacts the 5S rRNA and the P site tRNA. Forms a bridge to the 30S subunit in the 70S ribosome.

Functionally, this is one of the proteins that bind and probably mediate the attachment of the 5S RNA into the large ribosomal subunit, where it forms part of the central protuberance. In the 70S ribosome it contacts protein S13 of the 30S subunit (bridge B1b), connecting the 2 subunits; this bridge is implicated in subunit movement. Contacts the P site tRNA; the 5S rRNA and some of its associated proteins might help stabilize positioning of ribosome-bound tRNAs. The chain is Large ribosomal subunit protein uL5 from Pectobacterium carotovorum subsp. carotovorum (strain PC1).